The chain runs to 173 residues: dCTP deaminase, dUMP-forming (173 aa).

DCTP-binding positions include 93-98 (RSSIGR), aspartate 111, 119-121 (TLE), glutamine 138, and tyrosine 151. Glutamate 121 acts as the Proton donor/acceptor in catalysis.

Belongs to the dCTP deaminase family. As to quaternary structure, homotrimer.

It catalyses the reaction dCTP + 2 H2O = dUMP + NH4(+) + diphosphate. It functions in the pathway pyrimidine metabolism; dUMP biosynthesis; dUMP from dCTP: step 1/1. Its function is as follows. Bifunctional enzyme that catalyzes both the deamination of dCTP to dUTP and the hydrolysis of dUTP to dUMP without releasing the toxic dUTP intermediate. This chain is dCTP deaminase, dUMP-forming, found in Clostridium acetobutylicum (strain ATCC 824 / DSM 792 / JCM 1419 / IAM 19013 / LMG 5710 / NBRC 13948 / NRRL B-527 / VKM B-1787 / 2291 / W).